We begin with the raw amino-acid sequence, 955 residues long: MDQNGVNAGNGHKSIDLIQIMDKWQKKWTEAKIFEAEHDLRDKFFITAAFPYLNGVLHAGHLRTFTIPETIARYQRMKNKNVLWTFGFHVTGTPILGLANQIKERKEDIIWAYNNLHNIPMDELIKLDTPEAIVECFSKKATEAFKRMGFSLDWRRNFKTDDKVFSKFIEWQFYKLKEMGHITKGSHPVRYCPKCENPVEDHDLLHGEESTTVEYSLIKFTSEFDGKEIIMPMATLRPETLFGVTNAWVNPNEMYVMAEVYDEIQKLDSEDVDLKYNGIWIVGKECADKLKEQDRKIEILKEIKGSELLGLKIKNPVTKKEVPLFPADFVEMGIGTGCVMGVPAHAPYDYIALRDLGKIEEVGLIPLIEIEGYDKFPAKEIVEKLGVKDQNDDELLEQATSKIYKDEFHKGKLNENCGEYAGISVKDIKEKLTKDYLNSNIAEIMYEFSEQKVVCRCGEKCIIKTVKGQWFINYSDENWKKLAHECIDSMNFAPENIRQEFHNKVDWMKDKACARKKGLGTLLPFDENWIIESLSDSTIYMAYYTIARFINEGLTPEQLVPELFEYVFLGNGNVEEIAKNSNISKETIEEMRKEFLYYYPLDWRCSAKDLIPNHLTFMIFNHVALFKKEHWPRGIEINGYVTIEGKKLSKSKGPVLPVSEVAENFGADVARFYITTCAELPQDADVKFKEMEKARDNLIKLYELAVSVMEEESTQKEFSLIDKWLLHKTYSSIKGAETAYEEFQLRKIGLMFYELINDLRWYKRRGGENNNVLKEVVEIWTKLLSPVTPHLCEEIWEKLGYSGFISQEMYPEIKSELINEDLELGEEFIKSAMEDIRNIKGVAKINPEKMYLYTADDWKYDLLEFMNENSEKNVKAIIPLVMKEDKFKRHGKEVMKLINEIMKIGVKKAIAEVEILENAKTFIESEFDCEVIVNGEDVKGKKKFAIPYKPAIYME.

Positions 51–61 match the 'HIGH' region motif; the sequence is PYLNGVLHAGH. Positions 647–651 match the 'KMSKS' region motif; the sequence is KLSKS. ATP is bound at residue Lys-650.

The protein belongs to the class-I aminoacyl-tRNA synthetase family.

It localises to the cytoplasm. The catalysed reaction is tRNA(Leu) + L-leucine + ATP = L-leucyl-tRNA(Leu) + AMP + diphosphate. The polypeptide is Leucine--tRNA ligase (Methanococcus maripaludis (strain C7 / ATCC BAA-1331)).